The following is a 140-amino-acid chain: Ribosome maturation factor RimP (140 aa).

The protein belongs to the RimP family.

It localises to the cytoplasm. Its function is as follows. Required for maturation of 30S ribosomal subunits. The sequence is that of Ribosome maturation factor RimP from Campylobacter jejuni subsp. doylei (strain ATCC BAA-1458 / RM4099 / 269.97).